The following is a 108-amino-acid chain: uncharacterized protein (108 aa).

Residues 64–84 (LFIIYYYYYLLICLSPHFFPI) form a helical membrane-spanning segment.

The protein localises to the membrane. This is an uncharacterized protein from Schizosaccharomyces pombe (strain 972 / ATCC 24843) (Fission yeast).